Here is a 467-residue protein sequence, read N- to C-terminus: MLLLLLLLLLWGIKGVEGQNPQEVFTLNVERKVVVQEGLCVLVPCNFSYLKKRLTDWTDSDPVHGFWYREGTDRRKDSIVATNNPIRKAVKETRNRFFLLGDPWRNDCSLNIREIRKKDAGLYFFRLERGKTKYNYMWDKMTLVVTALTNTPQILLPETLEAGHPSNLTCSVPWDCGWTAPPIFSWTGTSVSFLSTNTTGSSVLTITPQPQDHGTNLTCQVTLPGTNVSTRMTIRLNVSYAPKNLTVTIYQGADSVSTILKNGSSLPISEGQSLRLICSTDSYPPANLSWSWDNLTLCPSKLSKPGLLELFPVHLKHGGVYTCQAQHALGSQHISLSLSPQSSATLSEMMMGTFVGSGVTALLFLSVCILLLAVRSYRRKPARPAVVAPHPDALKVSVSQNPLVESQADDSSEPLPSILEAAPSSTEEEIHYATLSFHEMKPMNLWGQQDTTTEYSEIKFPQRTAWP.

An N-terminal signal peptide occupies residues 1–18 (MLLLLLLLLLWGIKGVEG). Residues 19-353 (QNPQEVFTLN…ATLSEMMMGT (335 aa)) are Extracellular-facing. The Ig-like V-type domain occupies 21–141 (PQEVFTLNVE…TKYNYMWDKM (121 aa)). Intrachain disulfides connect cysteine 40-cysteine 176, cysteine 45-cysteine 108, and cysteine 170-cysteine 219. N-linked (GlcNAc...) asparagine glycosylation is present at asparagine 46. Residue arginine 126 participates in N-acetylneuraminate binding. Ig-like C2-type domains follow at residues 152–239 (PQIL…LNVS) and 242–339 (PKNL…LSLS). 9 N-linked (GlcNAc...) asparagine glycosylation sites follow: asparagine 167, asparagine 197, asparagine 216, asparagine 227, asparagine 237, asparagine 244, asparagine 262, asparagine 287, and asparagine 294. A disulfide bridge links cysteine 278 with cysteine 323. A helical transmembrane segment spans residues 354-374 (FVGSGVTALLFLSVCILLLAV). Topologically, residues 375-467 (RSYRRKPARP…IKFPQRTAWP (93 aa)) are cytoplasmic. An ITIM motif motif is present at residues 430–435 (IHYATL). Tyrosine 432 and tyrosine 455 each carry phosphotyrosine. Residues 453–458 (TEYSEI) carry the SLAM-like motif motif.

The protein belongs to the immunoglobulin superfamily. SIGLEC (sialic acid binding Ig-like lectin) family. In terms of assembly, homodimer; disulfide-linked. Interacts with PTPN6/SHP-1 and PTPN11/SHP-2 upon phosphorylation. In terms of processing, phosphorylation of Tyr-432 is required for binding to PTPN6 and PTPN11. Phosphorylation of Tyr-455 is involved in binding to PTPN6. Tyr-432 needs to be phosphorylated prior to Tyr-455. Expressed by monocytic/myeloid lineage cells. Found at higher levels in spleen, liver and heart. Found at lower levels in kidney and lung.

It localises to the membrane. In terms of biological role, putative adhesion molecule that mediates sialic-acid dependent binding to cells. The sialic acid recognition site may be masked by cis interactions with sialic acids on the same cell surface. In the immune response, may act as an inhibitory receptor upon ligand induced tyrosine phosphorylation by recruiting cytoplasmic phosphatase(s) via their SH2 domain(s) that block signal transduction through dephosphorylation of signaling molecules. In Mus musculus (Mouse), this protein is Sialic acid-binding Ig-like lectin 12 (Siglec12).